Reading from the N-terminus, the 22-residue chain is Probable ATP-dependent Clp protease proteolytic subunit (22 aa).

Belongs to the peptidase S14 family. In terms of assembly, component of the chloroplastic Clp protease core complex.

It carries out the reaction Hydrolysis of proteins to small peptides in the presence of ATP and magnesium. alpha-casein is the usual test substrate. In the absence of ATP, only oligopeptides shorter than five residues are hydrolyzed (such as succinyl-Leu-Tyr-|-NHMec, and Leu-Tyr-Leu-|-Tyr-Trp, in which cleavage of the -Tyr-|-Leu- and -Tyr-|-Trp bonds also occurs).. Functionally, cleaves peptides in various proteins in a process that requires ATP hydrolysis. Has a chymotrypsin-like activity. Plays a major role in the degradation of misfolded proteins. This Populus euphratica (Euphrates poplar) protein is Probable ATP-dependent Clp protease proteolytic subunit.